A 663-amino-acid polypeptide reads, in one-letter code: General transcription and DNA repair factor IIH subunit tcf-29 (663 aa).

BSD domains follow at residues 147–206 and 227–278; these read WFED…RAYA and ENGE…LSKK. 2 disordered regions span residues 452–491 and 513–535; these read DSDG…QHVG and HLTT…EERP. Residues 453–465 are compositionally biased toward basic and acidic residues; it reads SDGRGGIDLHRSI. A compositionally biased stretch (low complexity) spans 515 to 528; sequence TTTTTHGGSHTTTT.

The protein belongs to the TFB1 family. Component of the 7-subunit TFIIH core complex composed of XPB/rad25, XPD/dnr-10, tcf-30/SSL1, tcf-29/TFB1, tcf-11/TFB2, tcf-14/TFB4 and rtf-1/TFB5, which is active in NER. The core complex associates with the 3-subunit CTD-kinase module TFIIK composed of div-66/cyclin H, prk-3/KIN28 and rtf-2/TFB3 to form the 10-subunit holoenzyme (holo-TFIIH) active in transcription.

It is found in the nucleus. Its function is as follows. Component of the general transcription and DNA repair factor IIH (TFIIH) core complex, which is involved in general and transcription-coupled nucleotide excision repair (NER) of damaged DNA and, when complexed to TFIIK, in RNA transcription by RNA polymerase II. In NER, TFIIH acts by opening DNA around the lesion to allow the excision of the damaged oligonucleotide and its replacement by a new DNA fragment. In transcription, TFIIH has an essential role in transcription initiation. When the pre-initiation complex (PIC) has been established, TFIIH is required for promoter opening and promoter escape. Phosphorylation of the C-terminal tail (CTD) of the largest subunit of RNA polymerase II by the kinase module TFIIK controls the initiation of transcription. The sequence is that of General transcription and DNA repair factor IIH subunit tcf-29 (tcf-29) from Neurospora crassa (strain ATCC 24698 / 74-OR23-1A / CBS 708.71 / DSM 1257 / FGSC 987).